The primary structure comprises 312 residues: Protein-methionine-sulfoxide reductase catalytic subunit MsrP (312 aa).

The tat-type signal signal peptide spans 1-42 (MALFRYPRPLPSEITPRDMYLSRRSLIGGAAALGAVSATADA). Mo-molybdopterin is bound by residues asparagine 68, 71–72 (YE), cysteine 126, serine 161, asparagine 211, arginine 216, and 227–229 (GIK).

The protein belongs to the MsrP family. Heterodimer of a catalytic subunit (MsrP) and a heme-binding subunit (MsrQ). Requires Mo-molybdopterin as cofactor. In terms of processing, predicted to be exported by the Tat system. The position of the signal peptide cleavage has not been experimentally proven.

Its subcellular location is the periplasm. The enzyme catalyses L-methionyl-[protein] + a quinone + H2O = L-methionyl-(S)-S-oxide-[protein] + a quinol. The catalysed reaction is L-methionyl-[protein] + a quinone + H2O = L-methionyl-(R)-S-oxide-[protein] + a quinol. In terms of biological role, part of the MsrPQ system that repairs oxidized periplasmic proteins containing methionine sulfoxide residues (Met-O), using respiratory chain electrons. Thus protects these proteins from oxidative-stress damage caused by reactive species of oxygen and chlorine generated by the host defense mechanisms. MsrPQ is essential for the maintenance of envelope integrity under bleach stress, rescuing a wide series of structurally unrelated periplasmic proteins from methionine oxidation. The catalytic subunit MsrP is non-stereospecific, being able to reduce both (R-) and (S-) diastereoisomers of methionine sulfoxide. In Gluconobacter oxydans (strain 621H) (Gluconobacter suboxydans), this protein is Protein-methionine-sulfoxide reductase catalytic subunit MsrP.